A 1579-amino-acid polypeptide reads, in one-letter code: Pentafunctional AROM polypeptide (1579 aa).

The segment at 1 to 391 (MKVELSKVPI…YGTSAHVVSD (391 aa)) is 3-dehydroquinate synthase. Residues 44–46 (DTN), 79–82 (EAHK), 110–112 (GGV), and Asp115 contribute to the NAD(+) site. Arg126 lines the 7-phospho-2-dehydro-3-deoxy-D-arabino-heptonate pocket. 135–136 (TS) contacts NAD(+). Residues Asp142 and Lys148 each coordinate 7-phospho-2-dehydro-3-deoxy-D-arabino-heptonate. Lys157 serves as a coordination point for NAD(+). Position 158 (Asn158) interacts with 7-phospho-2-dehydro-3-deoxy-D-arabino-heptonate. NAD(+)-binding positions include 175-178 (WLET) and Asn186. Residue Glu190 participates in Zn(2+) binding. Residues 190 to 193 (EVIK) and Lys257 contribute to the 7-phospho-2-dehydro-3-deoxy-D-arabino-heptonate site. Glu267 (proton acceptor; for 3-dehydroquinate synthase activity) is an active-site residue. 7-phospho-2-dehydro-3-deoxy-D-arabino-heptonate contacts are provided by residues 271 to 275 (RNLLN) and His278. His278 serves as a coordination point for Zn(2+). Residue His282 is the Proton acceptor; for 3-dehydroquinate synthase activity of the active site. 7-phospho-2-dehydro-3-deoxy-D-arabino-heptonate is bound by residues His294 and Lys363. His294 serves as a coordination point for Zn(2+). The segment at 404–862 (VYPFKTLENG…WDVLHTQLGA (459 aa)) is EPSP synthase. Cys844 functions as the For EPSP synthase activity in the catalytic mechanism. Residues 881–1070 (SIVIIGMRAA…IPTNRSSFVC (190 aa)) form a shikimate kinase region. 886 to 893 (GMRAAGKT) serves as a coordination point for ATP. The segment at 1071-1283 (LTFDDLAAHK…SAPGQLTLSQ (213 aa)) is 3-dehydroquinase. His1188 acts as the Proton acceptor; for 3-dehydroquinate dehydratase activity in catalysis. The Schiff-base intermediate with substrate; for 3-dehydroquinate dehydratase activity role is filled by Lys1217. The shikimate dehydrogenase stretch occupies residues 1296–1579 (AKNFYVVGSP…IYSAVTEEQA (284 aa)).

The protein in the N-terminal section; belongs to the sugar phosphate cyclases superfamily. Dehydroquinate synthase family. This sequence in the 2nd section; belongs to the EPSP synthase family. In the 3rd section; belongs to the shikimate kinase family. It in the 4th section; belongs to the type-I 3-dehydroquinase family. The protein in the C-terminal section; belongs to the shikimate dehydrogenase family. Homodimer. Zn(2+) is required as a cofactor.

The protein localises to the cytoplasm. The catalysed reaction is 7-phospho-2-dehydro-3-deoxy-D-arabino-heptonate = 3-dehydroquinate + phosphate. The enzyme catalyses 3-dehydroquinate = 3-dehydroshikimate + H2O. It catalyses the reaction shikimate + NADP(+) = 3-dehydroshikimate + NADPH + H(+). It carries out the reaction shikimate + ATP = 3-phosphoshikimate + ADP + H(+). The catalysed reaction is 3-phosphoshikimate + phosphoenolpyruvate = 5-O-(1-carboxyvinyl)-3-phosphoshikimate + phosphate. Its pathway is metabolic intermediate biosynthesis; chorismate biosynthesis; chorismate from D-erythrose 4-phosphate and phosphoenolpyruvate: step 2/7. The protein operates within metabolic intermediate biosynthesis; chorismate biosynthesis; chorismate from D-erythrose 4-phosphate and phosphoenolpyruvate: step 3/7. It participates in metabolic intermediate biosynthesis; chorismate biosynthesis; chorismate from D-erythrose 4-phosphate and phosphoenolpyruvate: step 4/7. It functions in the pathway metabolic intermediate biosynthesis; chorismate biosynthesis; chorismate from D-erythrose 4-phosphate and phosphoenolpyruvate: step 5/7. Its pathway is metabolic intermediate biosynthesis; chorismate biosynthesis; chorismate from D-erythrose 4-phosphate and phosphoenolpyruvate: step 6/7. Functionally, the AROM polypeptide catalyzes 5 consecutive enzymatic reactions in prechorismate polyaromatic amino acid biosynthesis. In Lachancea thermotolerans (strain ATCC 56472 / CBS 6340 / NRRL Y-8284) (Yeast), this protein is Pentafunctional AROM polypeptide.